Here is a 305-residue protein sequence, read N- to C-terminus: L-lactate dehydrogenase (305 aa).

Residues Val-11, Asp-32, Lys-37, and 76-77 contribute to the NAD(+) site; that span reads GV. Residues Gln-79, Arg-85, and 117–120 contribute to the substrate site; that span reads NPVD. NAD(+) is bound by residues 115 to 117 and Ser-140; that span reads ATN. Position 145-148 (145-148) interacts with substrate; it reads DTAR. Beta-D-fructose 1,6-bisphosphate contacts are provided by Arg-150 and His-165. His-172 acts as the Proton acceptor in catalysis. Tyr-218 bears the Phosphotyrosine mark. Thr-227 serves as a coordination point for substrate.

This sequence belongs to the LDH/MDH superfamily. LDH family. In terms of assembly, homotetramer.

Its subcellular location is the cytoplasm. The enzyme catalyses (S)-lactate + NAD(+) = pyruvate + NADH + H(+). It functions in the pathway fermentation; pyruvate fermentation to lactate; (S)-lactate from pyruvate: step 1/1. Its activity is regulated as follows. Allosterically activated by fructose 1,6-bisphosphate (FBP). Its function is as follows. Catalyzes the conversion of lactate to pyruvate. The protein is L-lactate dehydrogenase of Chloroherpeton thalassium (strain ATCC 35110 / GB-78).